Here is a 432-residue protein sequence, read N- to C-terminus: Glutamate-1-semialdehyde 2,1-aminomutase (432 aa).

At lysine 271 the chain carries N6-(pyridoxal phosphate)lysine.

The protein belongs to the class-III pyridoxal-phosphate-dependent aminotransferase family. HemL subfamily. As to quaternary structure, homodimer. The cofactor is pyridoxal 5'-phosphate.

Its subcellular location is the cytoplasm. The catalysed reaction is (S)-4-amino-5-oxopentanoate = 5-aminolevulinate. The protein operates within porphyrin-containing compound metabolism; protoporphyrin-IX biosynthesis; 5-aminolevulinate from L-glutamyl-tRNA(Glu): step 2/2. The protein is Glutamate-1-semialdehyde 2,1-aminomutase of Protochlamydia amoebophila (strain UWE25).